Reading from the N-terminus, the 179-residue chain is Large ribosomal subunit protein uL5 (179 aa).

Belongs to the universal ribosomal protein uL5 family. Part of the 50S ribosomal subunit; part of the 5S rRNA/L5/L18/L25 subcomplex. Contacts the 5S rRNA and the P site tRNA. Forms a bridge to the 30S subunit in the 70S ribosome.

Functionally, this is one of the proteins that bind and probably mediate the attachment of the 5S RNA into the large ribosomal subunit, where it forms part of the central protuberance. In the 70S ribosome it contacts protein S13 of the 30S subunit (bridge B1b), connecting the 2 subunits; this bridge is implicated in subunit movement. Contacts the P site tRNA; the 5S rRNA and some of its associated proteins might help stabilize positioning of ribosome-bound tRNAs. The chain is Large ribosomal subunit protein uL5 from Citrifermentans bemidjiense (strain ATCC BAA-1014 / DSM 16622 / JCM 12645 / Bem) (Geobacter bemidjiensis).